The sequence spans 496 residues: Apulose kinase (496 aa).

ATP is bound by residues 13-15 (TTN), T267, G308, and 408-412 (GATQN).

This sequence belongs to the FGGY kinase family.

The enzyme catalyses apulose + ATP = apulose 4-phosphate + ADP + H(+). Its pathway is carbohydrate metabolism. Involved in catabolism of D-apiose. Catalyzes phosphorylation of apulose to form apulose 4-phosphate. The protein is Apulose kinase of Pectobacterium atrosepticum (strain SCRI 1043 / ATCC BAA-672) (Erwinia carotovora subsp. atroseptica).